A 511-amino-acid chain; its full sequence is Glucans biosynthesis protein G (511 aa).

Residues 1-22 (MMKMRWLGAAIMLTLYASSSWA) form the signal peptide.

Belongs to the OpgD/OpgG family.

The protein localises to the periplasm. It functions in the pathway glycan metabolism; osmoregulated periplasmic glucan (OPG) biosynthesis. Involved in the biosynthesis of osmoregulated periplasmic glucans (OPGs). This chain is Glucans biosynthesis protein G, found in Salmonella enteritidis PT4 (strain P125109).